The following is a 2128-amino-acid chain: Spectrin beta chain, erythrocytic (2128 aa).

The span at 1 to 15 (MTSATEFENVGNQPP) shows a compositional bias: polar residues. Residues 1 to 30 (MTSATEFENVGNQPPFSRINARWDAPDDEL) form a disordered region. An actin-binding region spans residues 2–275 (TSATEFENVG…IITYVVAFYH (274 aa)). Phosphoserine is present on S36. 2 Calponin-homology (CH) domains span residues 54–158 (VVQK…LRFQ) and 173–278 (RSAK…HYFS). Position 104 is a phosphothreonine (T104). Spectrin repeat units lie at residues 303-411 (MIEK…LALR), 416-517 (RQEF…QRLE), 521-627 (ALQK…QLEQ), 630-733 (RLWK…DLQD), 736-838 (NFFQ…KLQE), 845-942 (VFGE…REAV), 950-1050 (NYCV…LSLG), 1054-1157 (KLQA…NTLT), 1162-1250 (FQEF…RHKK), 1267-1368 (ELQN…EQLS), 1381-1455 (ADLN…FLDL), 1473-1574 (LQIS…RLRD), 1576-1680 (HEAQ…RLEN), 1682-1784 (YHLF…MQLL), 1789-1890 (DLHR…RAQL), 1897-1997 (FRFF…DRLH), and 2004-2064 (QFSR…KPTT). At S1289 the chain carries Phosphoserine. Residue S2034 is modified to Phosphoserine. Residues 2062-2108 (PTTLELKERQTPERPTEEPGPQEEEGETAGEAPQVHHAATERTSPVS) form a disordered region. Phosphothreonine is present on residues T2064, T2072, and T2101. Positions 2066–2078 (ELKERQTPERPTE) are enriched in basic and acidic residues. A phosphoserine mark is found at S2105, S2108, S2114, S2116, and S2119.

It belongs to the spectrin family. As to quaternary structure, composed of nonhomologous chains, alpha and beta, which aggregate to form dimers, tetramers, and higher polymers. Interacts with BCAM.

It is found in the cytoplasm. The protein resides in the cytoskeleton. It localises to the cell cortex. Functionally, spectrin is the major constituent of the cytoskeletal network underlying the erythrocyte plasma membrane. It associates with band 4.1 and actin to form the cytoskeletal superstructure of the erythrocyte plasma membrane. The polypeptide is Spectrin beta chain, erythrocytic (Sptb) (Mus musculus (Mouse)).